Reading from the N-terminus, the 88-residue chain is Putative defensin-like protein 256 (88 aa).

An N-terminal signal peptide occupies residues 1 to 25 (MKSSIFFKLLLLVSLLVVIFRQSYA). Cystine bridges form between cysteine 30–cysteine 46, cysteine 36–cysteine 53, and cysteine 40–cysteine 55.

The protein belongs to the DEFL family.

The protein resides in the secreted. The protein is Putative defensin-like protein 256 of Arabidopsis thaliana (Mouse-ear cress).